Consider the following 263-residue polypeptide: Ribonuclease HII (263 aa).

In terms of domain architecture, RNase H type-2 spans 74–262 (EHVAGLDEVG…VQETAATRQT (189 aa)). The a divalent metal cation site is built by Asp-80, Glu-81, and Asp-172.

It belongs to the RNase HII family. Mn(2+) is required as a cofactor. The cofactor is Mg(2+).

Its subcellular location is the cytoplasm. It catalyses the reaction Endonucleolytic cleavage to 5'-phosphomonoester.. Endonuclease that specifically degrades the RNA of RNA-DNA hybrids. The sequence is that of Ribonuclease HII (rnhB) from Halalkalibacterium halodurans (strain ATCC BAA-125 / DSM 18197 / FERM 7344 / JCM 9153 / C-125) (Bacillus halodurans).